Reading from the N-terminus, the 69-residue chain is Small ribosomal subunit protein uS14 (69 aa).

Cysteine 33, cysteine 36, cysteine 51, and cysteine 54 together coordinate Zn(2+).

It belongs to the universal ribosomal protein uS14 family. Zinc-binding uS14 subfamily. As to quaternary structure, part of the 30S ribosomal subunit. Zn(2+) serves as cofactor.

Binds 16S rRNA, required for the assembly of 30S particles. The protein is Small ribosomal subunit protein uS14 of Nanoarchaeum equitans (strain Kin4-M).